Reading from the N-terminus, the 164-residue chain is Cell division protein SepF (164 aa).

The interval 29-57 (INKGRGASQQEYDEYYEDSTPTVTQKEDP) is disordered.

Belongs to the SepF family. As to quaternary structure, homodimer. Interacts with FtsZ.

The protein resides in the cytoplasm. Cell division protein that is part of the divisome complex and is recruited early to the Z-ring. Probably stimulates Z-ring formation, perhaps through the cross-linking of FtsZ protofilaments. Its function overlaps with FtsA. The protein is Cell division protein SepF of Exiguobacterium sibiricum (strain DSM 17290 / CCUG 55495 / CIP 109462 / JCM 13490 / 255-15).